A 116-amino-acid chain; its full sequence is Ribonuclease P protein component (116 aa).

It belongs to the RnpA family. As to quaternary structure, consists of a catalytic RNA component (M1 or rnpB) and a protein subunit.

It catalyses the reaction Endonucleolytic cleavage of RNA, removing 5'-extranucleotides from tRNA precursor.. Its function is as follows. RNaseP catalyzes the removal of the 5'-leader sequence from pre-tRNA to produce the mature 5'-terminus. It can also cleave other RNA substrates such as 4.5S RNA. The protein component plays an auxiliary but essential role in vivo by binding to the 5'-leader sequence and broadening the substrate specificity of the ribozyme. This is Ribonuclease P protein component from Leuconostoc citreum (strain KM20).